The following is a 148-amino-acid chain: Auxin-responsive protein SAUR65 (148 aa).

The protein belongs to the ARG7 family.

Its subcellular location is the cell membrane. Its function is as follows. May promote auxin-stimulated organ elongation, such as hypocotyls, stamen filaments and petals. This chain is Auxin-responsive protein SAUR65, found in Arabidopsis thaliana (Mouse-ear cress).